Reading from the N-terminus, the 211-residue chain is Imidazole glycerol phosphate synthase subunit HisH (211 aa).

Residues 4 to 211 form the Glutamine amidotransferase type-1 domain; sequence RVVILDYGSG…QLLANWVATL (208 aa). C82 acts as the Nucleophile in catalysis. Active-site residues include H192 and E194.

In terms of assembly, heterodimer of HisH and HisF.

It is found in the cytoplasm. The catalysed reaction is 5-[(5-phospho-1-deoxy-D-ribulos-1-ylimino)methylamino]-1-(5-phospho-beta-D-ribosyl)imidazole-4-carboxamide + L-glutamine = D-erythro-1-(imidazol-4-yl)glycerol 3-phosphate + 5-amino-1-(5-phospho-beta-D-ribosyl)imidazole-4-carboxamide + L-glutamate + H(+). The enzyme catalyses L-glutamine + H2O = L-glutamate + NH4(+). The protein operates within amino-acid biosynthesis; L-histidine biosynthesis; L-histidine from 5-phospho-alpha-D-ribose 1-diphosphate: step 5/9. Its function is as follows. IGPS catalyzes the conversion of PRFAR and glutamine to IGP, AICAR and glutamate. The HisH subunit catalyzes the hydrolysis of glutamine to glutamate and ammonia as part of the synthesis of IGP and AICAR. The resulting ammonia molecule is channeled to the active site of HisF. The polypeptide is Imidazole glycerol phosphate synthase subunit HisH (Thermobifida fusca (strain YX)).